Consider the following 175-residue polypeptide: SKP1-like protein 20 (175 aa).

The interval 117 to 175 is interaction with the F-box domain of F-box proteins; sequence ILAANYLNIKGLLDLTCQTVADMIKGKTPEEIRKTFNIKNDFTPEEEEEVRRENQWAFE.

Belongs to the SKP1 family. Part of a SCF (SKP1-CUL1-F-box protein) E3 ubiquitin-protein ligase complex. Interacts with rice black streaked dwarf virus RBSDV protein P7-2. Is able to form the SCF complex together with CUL1 and the viral P7-2 protein. Interacts with D3.

The protein resides in the nucleus. The protein operates within protein modification; protein ubiquitination. Its function is as follows. Involved in ubiquitination and subsequent proteasomal degradation of target proteins. Together with CUL1, a RING-box and a F-box protein, it forms a SCF E3 ubiquitin ligase complex. The functional specificity of this complex depends on the type of F-box protein. In the SCF complex, it serves as an adapter that links the F-box protein to CUL1. The chain is SKP1-like protein 20 from Oryza sativa subsp. japonica (Rice).